Consider the following 425-residue polypeptide: Bifunctional phosphoribosylaminoimidazole carboxylase/phosphoribosylaminoimidazole succinocarboxamide synthetase (425 aa).

An N-acetylalanine modification is found at alanine 2. Positions 2 to 260 (ATAVVVNIGK…WVADRVELLL (259 aa)) are SAICAR synthetase domain. At tyrosine 22 the chain carries Phosphotyrosine. N6-acetyllysine is present on lysine 36. Serine 107 bears the Phosphoserine mark. Threonine 238 is subject to Phosphothreonine. Lysine 247 is modified (N6-acetyllysine). A linker region spans residues 261-266 (KSDSQC). The segment at 267-425 (RVVVLMGSTS…ADKKVRQCNL (159 aa)) is AIR carboxylase domain. Serine 274 carries the phosphoserine modification. Serine 332 contacts CO2.

This sequence in the N-terminal section; belongs to the SAICAR synthetase family. The protein in the C-terminal section; belongs to the AIR carboxylase family. Class II subfamily. As to quaternary structure, homooctamer.

The catalysed reaction is 5-amino-1-(5-phospho-D-ribosyl)imidazole-4-carboxylate + L-aspartate + ATP = (2S)-2-[5-amino-1-(5-phospho-beta-D-ribosyl)imidazole-4-carboxamido]succinate + ADP + phosphate + 2 H(+). It carries out the reaction 5-amino-1-(5-phospho-D-ribosyl)imidazole-4-carboxylate + H(+) = 5-amino-1-(5-phospho-beta-D-ribosyl)imidazole + CO2. It participates in purine metabolism; IMP biosynthesis via de novo pathway; 5-amino-1-(5-phospho-D-ribosyl)imidazole-4-carboxamide from 5-amino-1-(5-phospho-D-ribosyl)imidazole-4-carboxylate: step 1/2. Its pathway is purine metabolism; IMP biosynthesis via de novo pathway; 5-amino-1-(5-phospho-D-ribosyl)imidazole-4-carboxylate from 5-amino-1-(5-phospho-D-ribosyl)imidazole (carboxylase route): step 1/1. Bifunctional phosphoribosylaminoimidazole carboxylase and phosphoribosylaminoimidazole succinocarboxamide synthetase catalyzing two reactions of the de novo purine biosynthetic pathway. The polypeptide is Bifunctional phosphoribosylaminoimidazole carboxylase/phosphoribosylaminoimidazole succinocarboxamide synthetase (Mus musculus (Mouse)).